Here is a 735-residue protein sequence, read N- to C-terminus: MLCLLLLLCGLASLGGPLKKYVENSGMQITVPEKIRSVKRGSVESEVSYKIVIENTTYIVNLVRKMFLPHDFQVYSYDSAGIMKPFEDYSQNFCYYQGHIEGFPTSLASISTCAGLRGLLQFETVSYGIEPLKSSIGFEHVIYPVKHDNEKSQYLKKSINVKNVVYKIKSIKSSVRTHYIEMHIIVEKNLYKHMGGNTATVTEKIFQLVGLMNAFFSTLNLTVILASLELWIDENKIPTTGDVNELLHAFQKWKKSYLVLRPHDVAFLLVYRESPSYIGAIFQGMICNTSYGGGIALHSKTITLDSFGVILVQLLSVSMGIAYDNADLCRCRGAICLMSPEAVFSSGMKMFSNCSVKAFKLFTSSQVSQCLQNQPYLEPVYRSNPVCGNNRVEQGEDCDCGSQEECQDTCCDAATCRLKSTSRCAQGPCCNQCEFKTKGEVCRESTDECDLPEYCNGSSGACQEDLYVINGHRCANEEWICMNGRCLSGKAQVQETFGTEMEMGSVDCFEQLNTKNDITGNCGILSPGNYKACGASNWKCGKLICSYDKSEILRNKEGMTIYANISGHICVSIEYPPGHAKSALMWVRDGTVCGPSEVCRQQQCVSSSYLGYDCTPATCSDHGVCNNKRHCHCNPTYVPPNCETQDSTKPGGSVDSGNLRYEPIPETYFVEGAYHTKSRKWPFFLIIPFFVIFSVLVATVVKVYYQKKKWKTEDYANDENIESESEPKSSKVSSK.

The signal sequence occupies residues 1 to 15; that stretch reads MLCLLLLLCGLASLG. Residues 16-176 constitute a propeptide that is removed on maturation; sequence GPLKKYVENS…KIKSIKSSVR (161 aa). The Extracellular segment spans residues 16-680; the sequence is GPLKKYVENS…EGAYHTKSRK (665 aa). Asparagine 55, asparagine 220, and asparagine 288 each carry an N-linked (GlcNAc...) asparagine glycan. The region spanning 178-375 is the Peptidase M12B domain; that stretch reads HYIEMHIIVE…QVSQCLQNQP (198 aa). Intrachain disulfides connect cysteine 287/cysteine 370, cysteine 329/cysteine 354, cysteine 331/cysteine 336, and cysteine 442/cysteine 455. An N-linked (GlcNAc...) asparagine glycan is attached at asparagine 353. Residues 384 to 470 enclose the Disintegrin domain; the sequence is NPVCGNNRVE…ACQEDLYVIN (87 aa). N-linked (GlcNAc...) asparagine glycosylation is found at asparagine 456 and asparagine 564. An EGF-like domain is found at 610–643; sequence LGYDCTPATCSDHGVCNNKRHCHCNPTYVPPNCE. Disulfide bonds link cysteine 614/cysteine 625, cysteine 619/cysteine 631, and cysteine 633/cysteine 642. A helical transmembrane segment spans residues 681–701; the sequence is WPFFLIIPFFVIFSVLVATVV. Residues 702–735 are Cytoplasmic-facing; sequence KVYYQKKKWKTEDYANDENIESESEPKSSKVSSK. The tract at residues 716-735 is disordered; that stretch reads ANDENIESESEPKSSKVSSK. Serine 723 bears the Phosphoserine mark.

Heterodimer with ADAM1/fertilin subunit alpha. In terms of processing, the signal and the metalloprotease domain are cleaved during the epididymal maturation of the spermatozoa. In terms of tissue distribution, expressed specifically in testis.

The protein resides in the membrane. Functionally, sperm surface membrane protein that may be involved in sperm-egg plasma membrane adhesion and fusion during fertilization. Could have a direct role in sperm-zona binding or migration of sperm from the uterus into the oviduct. Interactions with egg membrane could be mediated via binding between its disintegrin-like domain to one or more integrins receptors on the egg. This is a non catalytic metalloprotease-like protein. The chain is Disintegrin and metalloproteinase domain-containing protein 2 (ADAM2) from Cavia porcellus (Guinea pig).